The following is a 927-amino-acid chain: Nonsense-mediated mRNA decay factor SMG8 (927 aa).

Disordered stretches follow at residues 543 to 581 (NTGK…NTAS), 611 to 636 (QARS…DTEN), and 643 to 662 (QEPA…AVST). The segment covering 551-566 (QDEDAGEDEAEEEEGQ) has biased composition (acidic residues). A compositionally biased stretch (polar residues) spans 613-633 (RSEQLSNSEQNTTRSGSSSVD). Basic and acidic residues predominate over residues 644-654 (EPAKKEAREDV).

The protein belongs to the SMG8 family.

In terms of biological role, involved in nonsense-mediated decay (NMD) of mRNAs containing premature stop codons. Probable component of kinase complex containing nonC and recruited to stalled ribosomes. The protein is Nonsense-mediated mRNA decay factor SMG8 of Drosophila sechellia (Fruit fly).